A 773-amino-acid chain; its full sequence is Kelch domain-containing protein 7A (773 aa).

A helical membrane pass occupies residues 23 to 40 (VVLSAAALLLVTAAYKLY). Asn-61 carries an N-linked (GlcNAc...) asparagine glycan. 2 disordered regions span residues 64-99 (EALG…LDYS) and 114-207 (SEEA…APNG). Ser-89 is subject to Phosphoserine. Residues 114-126 (SEEATRKGSDESQ) show a composition bias toward basic and acidic residues. Asn-256 carries an N-linked (GlcNAc...) asparagine glycan. The tract at residues 296–355 (KADSRPVPCPAALADAPSPGPGPEPLVTGAASRDEAANTAGGGASEAASPQPVASPSAPG) is disordered. Kelch repeat units lie at residues 323-370 (TGAA…ENPE), 488-534 (KRLV…LCTL), 537-585 (YLFV…ALEG), 586-628 (HLYA…ATVC), and 631-673 (EIFV…AVNG). Residues 340–354 (SEAASPQPVASPSAP) show a composition bias toward low complexity. A Phosphoserine modification is found at Ser-361.

It localises to the membrane. This Mus musculus (Mouse) protein is Kelch domain-containing protein 7A (Klhdc7a).